A 155-amino-acid polypeptide reads, in one-letter code: Ribosomal RNA large subunit methyltransferase H (155 aa).

S-adenosyl-L-methionine contacts are provided by residues leucine 73, glycine 104, and 123 to 128 (LSPLTL).

Belongs to the RNA methyltransferase RlmH family. In terms of assembly, homodimer.

The protein localises to the cytoplasm. The catalysed reaction is pseudouridine(1915) in 23S rRNA + S-adenosyl-L-methionine = N(3)-methylpseudouridine(1915) in 23S rRNA + S-adenosyl-L-homocysteine + H(+). Functionally, specifically methylates the pseudouridine at position 1915 (m3Psi1915) in 23S rRNA. The polypeptide is Ribosomal RNA large subunit methyltransferase H (Pseudomonas aeruginosa (strain LESB58)).